Consider the following 363-residue polypeptide: MTIERVGLVVHGGREGAAEAAREVREWCDENAVACTDIDVWSDTGRHSAREEVDAAGDPDLVVTLGGDGTFLRGARLAAENDALILGVDLGRVGFLTEVPAPAVRSALDAVRDGGLEPESRMLLTLRASRLLEIPAEMEALLRYGRGPLLPPPRVRTDCESGDEWGIALNVTALNDVVLEKLSRDRQISVGVYIAGRLLASYSADALLVATPTGSTAYSFAAGGPVVSPRAEALVFTAVAPHMTFDRSVVTAPDEPVGLRILERSGRAAVSIDGQLRGVLDPGDWLGVYAAPRRLRAVRLGPMDFYGRLRERMRLTDAPAAVADGTPAPLWPVSTPPPGDLAHLALPVPGAEGASGDLLREQS.

Residue D68 is the Proton acceptor of the active site. NAD(+) contacts are provided by residues 68–69 (DG), R73, 175–176 (ND), R186, D205, A240, and Q275.

Belongs to the NAD kinase family. A divalent metal cation serves as cofactor.

It localises to the cytoplasm. The enzyme catalyses NAD(+) + ATP = ADP + NADP(+) + H(+). In terms of biological role, involved in the regulation of the intracellular balance of NAD and NADP, and is a key enzyme in the biosynthesis of NADP. Catalyzes specifically the phosphorylation on 2'-hydroxyl of the adenosine moiety of NAD to yield NADP. The polypeptide is NAD kinase 1 (Streptomyces coelicolor (strain ATCC BAA-471 / A3(2) / M145)).